The primary structure comprises 355 residues: S-adenosylmethionine:tRNA ribosyltransferase-isomerase (355 aa).

This sequence belongs to the QueA family. In terms of assembly, monomer.

The protein localises to the cytoplasm. It carries out the reaction 7-aminomethyl-7-carbaguanosine(34) in tRNA + S-adenosyl-L-methionine = epoxyqueuosine(34) in tRNA + adenine + L-methionine + 2 H(+). Its pathway is tRNA modification; tRNA-queuosine biosynthesis. Transfers and isomerizes the ribose moiety from AdoMet to the 7-aminomethyl group of 7-deazaguanine (preQ1-tRNA) to give epoxyqueuosine (oQ-tRNA). The chain is S-adenosylmethionine:tRNA ribosyltransferase-isomerase from Aeromonas hydrophila subsp. hydrophila (strain ATCC 7966 / DSM 30187 / BCRC 13018 / CCUG 14551 / JCM 1027 / KCTC 2358 / NCIMB 9240 / NCTC 8049).